A 445-amino-acid polypeptide reads, in one-letter code: GTPase Der (445 aa).

EngA-type G domains are found at residues 3-167 and 180-353; these read PVIA…YAGQ and VKIA…AAAM. GTP-binding positions include 9-16, 56-60, 119-122, 186-193, 233-237, and 298-301; these read GRPNVGKS, DTGGF, NKAE, DTAGL, and NKWD. The KH-like domain maps to 354-438; the sequence is AKLPTPKLTR…PLRIEFRSST (85 aa).

It belongs to the TRAFAC class TrmE-Era-EngA-EngB-Septin-like GTPase superfamily. EngA (Der) GTPase family. Associates with the 50S ribosomal subunit.

GTPase that plays an essential role in the late steps of ribosome biogenesis. The chain is GTPase Der from Paraburkholderia phytofirmans (strain DSM 17436 / LMG 22146 / PsJN) (Burkholderia phytofirmans).